We begin with the raw amino-acid sequence, 360 residues long: Homeobox-leucine zipper protein HOX21 (360 aa).

Disordered stretches follow at residues 25 to 75 and 88 to 126; these read QQAA…SSAQ and MLGKRPMSYGDGGGGGDEVNGGGEDELSDDGSQAGEKKR. The segment covering 36–55 has biased composition (basic residues); it reads HHHHHHHGHHHEQQQHHHHL. The segment covering 56-68 has biased composition (pro residues); it reads GPPPPPPPHPHNP. The span at 97-109 shows a compositional bias: gly residues; it reads GDGGGGGDEVNGG. Positions 121–180 form a DNA-binding region, homeobox; that stretch reads AGEKKRRLNVEQVRTLEKNFELGNKLEPERKMQLARALGLQPRQVAIWFQNRRARWKTKQ. Residues 179-223 are leucine-zipper; it reads KQLEKDYDALKRQLDAVKAENDALLNHNKKLQAEIVALKGREAAS. Disordered stretches follow at residues 233 to 278 and 299 to 328; these read EASC…GGGG and GVDIDQLLHSSSGGAGGPKMEHHGGGGNVQ. Residues 234-246 show a composition bias toward polar residues; the sequence is ASCSNRSENSSEI.

Belongs to the HD-ZIP homeobox family. Class I subfamily. In terms of tissue distribution, expressed in seedlings, roots, stems, leaf blades and panicles.

It localises to the nucleus. Probable transcription factor. The protein is Homeobox-leucine zipper protein HOX21 (HOX21) of Oryza sativa subsp. indica (Rice).